The sequence spans 184 residues: Photosystem I assembly protein Ycf4 (184 aa).

Helical transmembrane passes span 21–43 and 58–80; these read NFFW…SSSY and VFIP…GFYL.

Belongs to the Ycf4 family.

It localises to the plastid. The protein resides in the chloroplast thylakoid membrane. Its function is as follows. Seems to be required for the assembly of the photosystem I complex. In Psilotum nudum (Whisk fern), this protein is Photosystem I assembly protein Ycf4.